Consider the following 414-residue polypeptide: Cytochrome c-554 (414 aa).

The N-terminal stretch at 1–24 (MQSSRPSDRQLAIVVSVAVGIVVA) is a signal peptide. Heme is bound by residues methionine 110, cysteine 131, cysteine 134, histidine 135, methionine 154, cysteine 179, cysteine 182, histidine 183, methionine 283, cysteine 294, cysteine 297, histidine 298, cysteine 378, cysteine 381, and histidine 382.

In terms of processing, binds 4 heme groups per subunit. Post-translationally, the N-terminus is blocked.

It is found in the periplasm. Its function is as follows. Serves as the immediate electron donor to the oxidized BChl2 (bacteriochlorophyll dimer) that is oxidized in the first step of light-induced charge separation. Can also oxidize low-potential substrates. In Chloroflexus aurantiacus (strain ATCC 29366 / DSM 635 / J-10-fl), this protein is Cytochrome c-554 (puf2C).